The following is a 342-amino-acid chain: Holliday junction branch migration complex subunit RuvB (342 aa).

Residues 4–182 (TDRLLSAGRR…FGIPIRLQFY (179 aa)) are large ATPase domain (RuvB-L). ATP-binding residues include Leu21, Arg22, Gly63, Lys66, Thr67, Thr68, Arg172, Tyr182, and Arg219. A Mg(2+)-binding site is contributed by Thr67. The tract at residues 183 to 253 (TVEELERVVS…VADQSLNRLE (71 aa)) is small ATPAse domain (RuvB-S). A head domain (RuvB-H) region spans residues 256–342 (NLGLDAMDRR…EAGQDGLFDV (87 aa)). The DNA site is built by Arg292, Arg311, and Arg316.

Belongs to the RuvB family. In terms of assembly, homohexamer. Forms an RuvA(8)-RuvB(12)-Holliday junction (HJ) complex. HJ DNA is sandwiched between 2 RuvA tetramers; dsDNA enters through RuvA and exits via RuvB. An RuvB hexamer assembles on each DNA strand where it exits the tetramer. Each RuvB hexamer is contacted by two RuvA subunits (via domain III) on 2 adjacent RuvB subunits; this complex drives branch migration. In the full resolvosome a probable DNA-RuvA(4)-RuvB(12)-RuvC(2) complex forms which resolves the HJ.

The protein localises to the cytoplasm. The catalysed reaction is ATP + H2O = ADP + phosphate + H(+). In terms of biological role, the RuvA-RuvB-RuvC complex processes Holliday junction (HJ) DNA during genetic recombination and DNA repair, while the RuvA-RuvB complex plays an important role in the rescue of blocked DNA replication forks via replication fork reversal (RFR). RuvA specifically binds to HJ cruciform DNA, conferring on it an open structure. The RuvB hexamer acts as an ATP-dependent pump, pulling dsDNA into and through the RuvAB complex. RuvB forms 2 homohexamers on either side of HJ DNA bound by 1 or 2 RuvA tetramers; 4 subunits per hexamer contact DNA at a time. Coordinated motions by a converter formed by DNA-disengaged RuvB subunits stimulates ATP hydrolysis and nucleotide exchange. Immobilization of the converter enables RuvB to convert the ATP-contained energy into a lever motion, pulling 2 nucleotides of DNA out of the RuvA tetramer per ATP hydrolyzed, thus driving DNA branch migration. The RuvB motors rotate together with the DNA substrate, which together with the progressing nucleotide cycle form the mechanistic basis for DNA recombination by continuous HJ branch migration. Branch migration allows RuvC to scan DNA until it finds its consensus sequence, where it cleaves and resolves cruciform DNA. The polypeptide is Holliday junction branch migration complex subunit RuvB (Rhizorhabdus wittichii (strain DSM 6014 / CCUG 31198 / JCM 15750 / NBRC 105917 / EY 4224 / RW1) (Sphingomonas wittichii)).